Reading from the N-terminus, the 249-residue chain is Glucosamine-6-phosphate deaminase (249 aa).

Residue aspartate 67 is the Proton acceptor; for enolization step of the active site. Residue asparagine 136 is the For ring-opening step of the active site. Residue histidine 138 is the Proton acceptor; for ring-opening step of the active site. Glutamate 143 (for ring-opening step) is an active-site residue.

Belongs to the glucosamine/galactosamine-6-phosphate isomerase family. NagB subfamily.

The catalysed reaction is alpha-D-glucosamine 6-phosphate + H2O = beta-D-fructose 6-phosphate + NH4(+). It functions in the pathway amino-sugar metabolism; N-acetylneuraminate degradation; D-fructose 6-phosphate from N-acetylneuraminate: step 5/5. In terms of biological role, catalyzes the reversible isomerization-deamination of glucosamine 6-phosphate (GlcN6P) to form fructose 6-phosphate (Fru6P) and ammonium ion. This chain is Glucosamine-6-phosphate deaminase, found in Clostridioides difficile (strain 630) (Peptoclostridium difficile).